Consider the following 218-residue polypeptide: uncharacterized protein (218 aa).

This is an uncharacterized protein from Caenorhabditis elegans.